Consider the following 122-residue polypeptide: Elsinochromes biosynthesis cluster protein HP4 (122 aa).

In terms of biological role, part of the gene cluster that mediates the biosynthesis of elsinochromes, pigments consisting of at least four interconvertible tautomers (A, B, C and D) that have a core phenolic quinone to which various side chains are attached and which play an important role in fungal pathogenesis. The non-reducing polyketide synthase PKS1 was proposed to iteratively catalyze decarboxylation between acetyl-CoA and malonyl-CoA subunits for polyketide chain elongation. The released polyketide undergoes cyclization to form an aromatic ring, and proceeds via serial modification steps to produce the heptaketide back- bone of elsinochrome. As elsinochrome has a symmetrical structure, two identical heptaketides are fused to form a core 1,2-dihydrobenzo-perylene ring structure, which can then be successively modified to produce the various derivatives of elsinochrome. Some of these reactions may be cooperatively carried out, at least in part, by the products of RDT1, OXR1 and PKS1. PRF1, embedded within the elsinochrome cluster possibly functions to stabilize some of the biosynthetic enzymes required for elsinochrome production. As prefoldin is a hexamer containing 2 a and 4 b subunits, additional prefoldin subunits, whose coding genes may not immediately link to the elsinochrome biosynthetic gene cluster, are required to fulfill the chaperone function. In addition, no methyltransferase-coding gene exists within the biosynthetic gene cluster, even though elsinochrome has four methyl groups at positions C3, C7, C8 and C12. Apparently, the identified gene cluster does not contain the entire entourage of genes responsible for elsinochrome biosynthesis. Once elsinochrome is synthesized, it must be exported outside the fungal cells, which is probably accomplished by the ECT1 transporter, to avoid toxicity. In Elsinoe fawcettii (Citrus scab fungus), this protein is Elsinochromes biosynthesis cluster protein HP4.